Consider the following 630-residue polypeptide: 1-deoxy-D-xylulose-5-phosphate synthase (630 aa).

Thiamine diphosphate-binding positions include His-74 and 115-117 (GHA). Asp-146 serves as a coordination point for Mg(2+). Thiamine diphosphate-binding positions include 147–148 (AA), Asn-175, Phe-284, and Glu-364. Asn-175 lines the Mg(2+) pocket.

It belongs to the transketolase family. DXPS subfamily. Homodimer. Mg(2+) is required as a cofactor. The cofactor is thiamine diphosphate.

The enzyme catalyses D-glyceraldehyde 3-phosphate + pyruvate + H(+) = 1-deoxy-D-xylulose 5-phosphate + CO2. It functions in the pathway metabolic intermediate biosynthesis; 1-deoxy-D-xylulose 5-phosphate biosynthesis; 1-deoxy-D-xylulose 5-phosphate from D-glyceraldehyde 3-phosphate and pyruvate: step 1/1. Catalyzes the acyloin condensation reaction between C atoms 2 and 3 of pyruvate and glyceraldehyde 3-phosphate to yield 1-deoxy-D-xylulose-5-phosphate (DXP). This Methylacidiphilum infernorum (isolate V4) (Methylokorus infernorum (strain V4)) protein is 1-deoxy-D-xylulose-5-phosphate synthase.